Here is a 126-residue protein sequence, read N- to C-terminus: Aspartate 1-decarboxylase (126 aa).

Catalysis depends on Ser-25, which acts as the Schiff-base intermediate with substrate; via pyruvic acid. Pyruvic acid (Ser) is present on Ser-25. Substrate is bound at residue Thr-57. The active-site Proton donor is the Tyr-58. 73-75 (GGA) contacts substrate.

This sequence belongs to the PanD family. As to quaternary structure, heterooctamer of four alpha and four beta subunits. Requires pyruvate as cofactor. Is synthesized initially as an inactive proenzyme, which is activated by self-cleavage at a specific serine bond to produce a beta-subunit with a hydroxyl group at its C-terminus and an alpha-subunit with a pyruvoyl group at its N-terminus.

It is found in the cytoplasm. The catalysed reaction is L-aspartate + H(+) = beta-alanine + CO2. It functions in the pathway cofactor biosynthesis; (R)-pantothenate biosynthesis; beta-alanine from L-aspartate: step 1/1. In terms of biological role, catalyzes the pyruvoyl-dependent decarboxylation of aspartate to produce beta-alanine. The chain is Aspartate 1-decarboxylase from Stenotrophomonas maltophilia (strain R551-3).